The sequence spans 374 residues: tRNA-specific 2-thiouridylase MnmA (374 aa).

ATP-binding positions include 13-20 (GMSGGVDS) and Met-39. The tract at residues 99–101 (NPD) is interaction with target base in tRNA. Cys-104 serves as the catalytic Nucleophile. Cysteines 104 and 201 form a disulfide. ATP is bound at residue Gly-128. The segment at 151 to 153 (KDQ) is interaction with tRNA. Cys-201 serves as the catalytic Cysteine persulfide intermediate. The tract at residues 313-314 (RY) is interaction with tRNA.

This sequence belongs to the MnmA/TRMU family.

It localises to the cytoplasm. It catalyses the reaction S-sulfanyl-L-cysteinyl-[protein] + uridine(34) in tRNA + AH2 + ATP = 2-thiouridine(34) in tRNA + L-cysteinyl-[protein] + A + AMP + diphosphate + H(+). Functionally, catalyzes the 2-thiolation of uridine at the wobble position (U34) of tRNA, leading to the formation of s(2)U34. The chain is tRNA-specific 2-thiouridylase MnmA from Streptococcus equi subsp. zooepidemicus (strain MGCS10565).